A 441-amino-acid polypeptide reads, in one-letter code: UBX domain-containing protein 6 (441 aa).

The mediates interaction with LMAN1 stretch occupies residues 1–10 (MKKFFQEFKA). At Lys2 the chain carries N-acetylalanine. Disordered stretches follow at residues 13–79 (KFKS…QDTI) and 87–106 (LQAE…NVVS). The segment covering 22-36 (KLKESVGEKAHKEKP) has biased composition (basic and acidic residues). The segment at 51-63 (EAQMAAAAALARL) is VCP/p97-interacting motif (VIM). Positions 52 to 61 (AQMAAAAALA) are enriched in low complexity. The residue at position 96 (Ser96) is a Phosphoserine. Residues 175-244 (VDTIAKYLDN…DPEEFYVLSE (70 aa)) enclose the PUB domain. One can recognise a UBX domain in the interval 332 to 408 (RKYNYTLLRV…GLVPSALLTF (77 aa)).

As to quaternary structure, interacts with VCP through the PUB domain (via C-terminus) and VIM motif (via N-terminus); the interaction is direct. Forms a ternary complex with CAV1 and VCP. Interacts with SYVN1. Interacts with HERPUD1. Interacts with VCPKMT. May interact with DERL1. Interacts with PLAA, VCP and YOD1; may form a complex involved in macroautophagy. Interacts with LMAN1. Enhanced expression in testis.

It is found in the cytoplasm. Its subcellular location is the cytosol. The protein localises to the membrane. It localises to the nucleus. The protein resides in the cytoskeleton. It is found in the microtubule organizing center. Its subcellular location is the centrosome. The protein localises to the early endosome membrane. It localises to the late endosome membrane. The protein resides in the lysosome membrane. Functionally, may negatively regulate the ATPase activity of VCP, an ATP-driven segregase that associates with different cofactors to control a wide variety of cellular processes. As a cofactor of VCP, it may play a role in the transport of CAV1 to lysosomes for degradation. It may also play a role in endoplasmic reticulum-associated degradation (ERAD) of misfolded proteins. Together with VCP and other cofactors, it may play a role in macroautophagy, regulating for instance the clearance of damaged lysosomes. The polypeptide is UBX domain-containing protein 6 (Homo sapiens (Human)).